The following is a 71-amino-acid chain: Exodeoxyribonuclease 7 small subunit (71 aa).

The protein belongs to the XseB family. In terms of assembly, heterooligomer composed of large and small subunits.

Its subcellular location is the cytoplasm. The enzyme catalyses Exonucleolytic cleavage in either 5'- to 3'- or 3'- to 5'-direction to yield nucleoside 5'-phosphates.. Bidirectionally degrades single-stranded DNA into large acid-insoluble oligonucleotides, which are then degraded further into small acid-soluble oligonucleotides. This chain is Exodeoxyribonuclease 7 small subunit, found in Streptococcus thermophilus (strain ATCC BAA-250 / LMG 18311).